A 520-amino-acid chain; its full sequence is Trichothecene O-acetyltransferase TRI3 (520 aa).

Residues 1 to 23 (MGSKLPELPKLSPEKHRWEKSNV) are disordered. The span at 12-23 (SPEKHRWEKSNV) shows a compositional bias: basic and acidic residues.

The protein belongs to the trichothecene O-acetyltransferase family.

It participates in sesquiterpene biosynthesis; trichothecene biosynthesis. Its function is as follows. Trichothecene O-acetyltransferase; part of the gene cluster that mediates the production of the antimicrobial trichothecene harzianum A (HA) that plays a role in Botrytis cinerea antagonistic activity and plant defense priming. The biosynthesis of harzianum A begins with the cyclization of farnesyl diphosphate to trichodiene and is catalyzed by the trichodiene synthase TRI5. Trichodiene undergoes a series of oxygenations catalyzed by the cytochrome P450 monooxygenase TRI4. TRI4 controls the addition of 3 oxygens at C-2, C-11, and the C-12, C-13-epoxide to form the intermediate isotrichodiol. Isotrichodiol then undergoes a non-enzymatic isomerization and cyclization to form 12,13-epoxytrichothec-9-ene (EPT) which is further converted to trichodermol by the cytochrome P450 monooxygenase TRI11 via C-4 hydroxylation. The last step of HA synthesis is esterification of an octatriendioyl moiety to the C-4 oxygen of trichodermol. The octatriendioyl moiety is probably produced by the polyketide synthase TRI17 and the esterification performed by the trichothecene O-acetyltransferase TRI3. The chain is Trichothecene O-acetyltransferase TRI3 from Trichoderma arundinaceum.